A 542-amino-acid chain; its full sequence is Major facilitator superfamily transporter mfsA (542 aa).

11 consecutive transmembrane segments (helical) span residues 19–39, 70–90, 99–119, 127–149, 160–180, 194–214, 321–341, 349–369, 380–400, 413–432, and 444–464; these read FAAVVGFSLFGYNQGMMAGLL, GAVTSCYELGCFFGALFSMFC, LIFMGASILIVGALLTTVCYT, FVIGRVVSGIGNGMNTATIPVWQ, FLVCFEGAMIAGGTFIAYWVV, FPVALQIFFALVVATGALMLP, IMGGVFASVYALATIPSFFMI, LYLIGFLGQGLSFVITFACLI, AVGIFLFITFFAFTLLPLPWI, VGASASTCTNWMCNFAVVMF, and VYLFFALFNFVGLIFGYFFYV.

This sequence belongs to the major facilitator superfamily. Sugar transporter (TC 2.A.1.1) family.

It localises to the membrane. In terms of biological role, major facilitator superfamily transporter that may be involved in A.fumigatus adaptation to azoles such as vorizonazole. The polypeptide is Major facilitator superfamily transporter mfsA (Aspergillus fumigatus (strain ATCC MYA-4609 / CBS 101355 / FGSC A1100 / Af293) (Neosartorya fumigata)).